The chain runs to 215 residues: Probable phosphoglycerate mutase GpmB (215 aa).

Substrate-binding positions include 8–15 (RHGESEWN), 21–22 (QG), arginine 58, arginine 60, 82–85 (ELHM), and 151–152 (GI). Histidine 9 acts as the Tele-phosphohistidine intermediate in catalysis. The Proton donor/acceptor role is filled by glutamate 82.

It belongs to the phosphoglycerate mutase family. GpmB subfamily.

It catalyses the reaction (2R)-2-phosphoglycerate = (2R)-3-phosphoglycerate. Its pathway is carbohydrate degradation; glycolysis; pyruvate from D-glyceraldehyde 3-phosphate: step 3/5. This is Probable phosphoglycerate mutase GpmB from Photorhabdus laumondii subsp. laumondii (strain DSM 15139 / CIP 105565 / TT01) (Photorhabdus luminescens subsp. laumondii).